The following is a 106-amino-acid chain: UPF0145 protein Cthe_0398 (106 aa).

Belongs to the UPF0145 family.

The sequence is that of UPF0145 protein Cthe_0398 from Acetivibrio thermocellus (strain ATCC 27405 / DSM 1237 / JCM 9322 / NBRC 103400 / NCIMB 10682 / NRRL B-4536 / VPI 7372) (Clostridium thermocellum).